The following is a 154-amino-acid chain: Ribonuclease H (154 aa).

The RNase H type-1 domain maps to Met-1–Gly-142. Residues Asp-10, Glu-48, Asp-70, and Asp-134 each coordinate Mg(2+).

This sequence belongs to the RNase H family. In terms of assembly, monomer. Requires Mg(2+) as cofactor.

The protein resides in the cytoplasm. It catalyses the reaction Endonucleolytic cleavage to 5'-phosphomonoester.. Endonuclease that specifically degrades the RNA of RNA-DNA hybrids. The protein is Ribonuclease H of Edwardsiella ictaluri (strain 93-146).